We begin with the raw amino-acid sequence, 581 residues long: 2-succinyl-5-enolpyruvyl-6-hydroxy-3-cyclohexene-1-carboxylate synthase (581 aa).

This sequence belongs to the TPP enzyme family. MenD subfamily. As to quaternary structure, homodimer. Requires Mg(2+) as cofactor. The cofactor is Mn(2+). Thiamine diphosphate serves as cofactor.

The catalysed reaction is isochorismate + 2-oxoglutarate + H(+) = 5-enolpyruvoyl-6-hydroxy-2-succinyl-cyclohex-3-ene-1-carboxylate + CO2. The protein operates within quinol/quinone metabolism; 1,4-dihydroxy-2-naphthoate biosynthesis; 1,4-dihydroxy-2-naphthoate from chorismate: step 2/7. Its pathway is cofactor biosynthesis; phylloquinone biosynthesis. Functionally, catalyzes the thiamine diphosphate-dependent decarboxylation of 2-oxoglutarate and the subsequent addition of the resulting succinic semialdehyde-thiamine pyrophosphate anion to isochorismate to yield 2-succinyl-5-enolpyruvyl-6-hydroxy-3-cyclohexene-1-carboxylate (SEPHCHC). This is 2-succinyl-5-enolpyruvyl-6-hydroxy-3-cyclohexene-1-carboxylate synthase from Gloeothece citriformis (strain PCC 7424) (Cyanothece sp. (strain PCC 7424)).